The primary structure comprises 346 residues: FMRFamide-related peptides type HF-1 (346 aa).

Positions M1–S19 are cleaved as a signal peptide. The propeptide occupies S20–N45. Residue F51 is modified to Phenylalanine amide. A propeptide spanning residues A54–S94 is cleaved from the precursor. Phenylalanine amide is present on F100. Positions S103–D109 are excised as a propeptide. Phenylalanine amide is present on F115. The propeptide occupies S118 to E203. Residues Y137–E185 form a disordered region. Over residues R141 to L152 the composition is skewed to basic and acidic residues. Residues D160 to K172 show a composition bias toward polar residues. Residues F173–E185 show a composition bias toward basic and acidic residues. 2 positions are modified to phenylalanine amide: F209 and F216. Positions G219–D226 are excised as a propeptide. A Phenylalanine amide modification is found at F232. The propeptide occupies S235–E243. Residues F249 and F256 each carry the phenylalanine amide modification. Positions G259–E267 are excised as a propeptide. F273 is subject to Phenylalanine amide. Residues S276 to I283 constitute a propeptide that is removed on maturation. F290 is modified (phenylalanine amide). Positions S293 to D301 are excised as a propeptide. Phenylalanine amide is present on residues F307 and F314. Positions S317–D325 are excised as a propeptide. A phenylalanine amide mark is found at F331 and F338. Positions G341 to S346 are excised as a propeptide.

Belongs to the FARP (FMRFamide related peptide) family. In terms of tissue distribution, central nervous system.

It localises to the secreted. Functionally, can function as both cardioregulatory hormones and transmitters and may regulate cardiovascular function. The sequence is that of FMRFamide-related peptides type HF-1 from Cornu aspersum (Brown garden snail).